The sequence spans 132 residues: Transmembrane protein 170B (132 aa).

The Extracellular portion of the chain corresponds to 1–37; sequence MKAEGGDHSMINLSVQQVLSLWAHGTVLRNLTEMWYW. An N-linked (GlcNAc...) asparagine glycan is attached at Asn12. The chain crosses the membrane as a helical span at residues 38-58; it reads IFLWALFSSLFVHGAAGVLMF. The Cytoplasmic segment spans residues 59 to 68; sequence VMLQRHRQGR. The chain crosses the membrane as a helical span at residues 69–89; that stretch reads VISVIAVSIGFLASVTGAMIT. The Extracellular portion of the chain corresponds to 90-104; the sequence is SAAVAGIYRVAGKNM. The chain crosses the membrane as a helical span at residues 105–125; that stretch reads APLEALVWGVGQTVLTLIISF. Over 126 to 132 the chain is Cytoplasmic; that stretch reads SRILATL.

This sequence belongs to the TMEM170 family. As to quaternary structure, interacts with CTNNB1. Expressed in normal breast tissues. Down-regulated in breast cancer cells (at protein level).

The protein resides in the cell membrane. Functionally, negatively regulates the canonical Wnt signaling in breast cancer cells. Exerts an inhibitory effect on breast cancer growth by inhibiting CTNNB1 stabilization and nucleus translocation, which reduces the activity of Wnt targets. This is Transmembrane protein 170B (TMEM170B) from Homo sapiens (Human).